The primary structure comprises 227 residues: Octanoyltransferase (227 aa).

Residues 35-222 enclose the BPL/LPL catalytic domain; that stretch reads EAYENRIIMC…ELGRLLNEKK (188 aa). Residues 80 to 87, 152 to 154, and 165 to 167 contribute to the substrate site; these read RGGDITYH, AIG, and GLA. Residue Cys183 is the Acyl-thioester intermediate of the active site.

The protein belongs to the LipB family.

It is found in the cytoplasm. It carries out the reaction octanoyl-[ACP] + L-lysyl-[protein] = N(6)-octanoyl-L-lysyl-[protein] + holo-[ACP] + H(+). Its pathway is protein modification; protein lipoylation via endogenous pathway; protein N(6)-(lipoyl)lysine from octanoyl-[acyl-carrier-protein]: step 1/2. In terms of biological role, catalyzes the transfer of endogenously produced octanoic acid from octanoyl-acyl-carrier-protein onto the lipoyl domains of lipoate-dependent enzymes. Lipoyl-ACP can also act as a substrate although octanoyl-ACP is likely to be the physiological substrate. This is Octanoyltransferase from Bacteroides thetaiotaomicron (strain ATCC 29148 / DSM 2079 / JCM 5827 / CCUG 10774 / NCTC 10582 / VPI-5482 / E50).